The sequence spans 492 residues: NAD(P)H-quinone oxidoreductase subunit 2 A, chloroplastic (492 aa).

The next 13 helical transmembrane spans lie at 6 to 26 (LLLF…GLIL), 39 to 59 (TPWL…ALLF), 81 to 101 (VFQF…VEYI), 106 to 126 (MAIT…MFLC), 131 to 151 (LITI…LSGY), 165 to 185 (YLLM…WLYG), 209 to 229 (PGIS…LSPA), 277 to 297 (WHLL…LIAI), 305 to 325 (MLAY…IVGD), 329 to 349 (GYAS…GTFA), 377 to 397 (ALSS…AGFF), 400 to 420 (LHLF…IGLL), and 466 to 486 (MIVC…IIAI).

Belongs to the complex I subunit 2 family. As to quaternary structure, NDH is composed of at least 16 different subunits, 5 of which are encoded in the nucleus.

The protein localises to the plastid. The protein resides in the chloroplast thylakoid membrane. It catalyses the reaction a plastoquinone + NADH + (n+1) H(+)(in) = a plastoquinol + NAD(+) + n H(+)(out). The catalysed reaction is a plastoquinone + NADPH + (n+1) H(+)(in) = a plastoquinol + NADP(+) + n H(+)(out). NDH shuttles electrons from NAD(P)H:plastoquinone, via FMN and iron-sulfur (Fe-S) centers, to quinones in the photosynthetic chain and possibly in a chloroplast respiratory chain. The immediate electron acceptor for the enzyme in this species is believed to be plastoquinone. Couples the redox reaction to proton translocation, and thus conserves the redox energy in a proton gradient. The protein is NAD(P)H-quinone oxidoreductase subunit 2 A, chloroplastic of Illicium oligandrum (Star anise).